The chain runs to 427 residues: Cholecystokinin receptor type A (427 aa).

The Extracellular segment spans residues 1–41 (MDAVASLLGNASGIPPPCELGLDNETLFCLDQPPPSKEWQP). N-linked (GlcNAc...) asparagine glycosylation is found at asparagine 10 and asparagine 24. Cysteine 18 and cysteine 29 are disulfide-bonded. A helical membrane pass occupies residues 42–67 (AVQILLYSLIFLLSVLGNTLVITVLI). The Cytoplasmic segment spans residues 68–77 (RNKRMRTVTN). Residues 78-104 (IFLLSLAISDLMLCLFCMPFNLIPNLL) traverse the membrane as a helical segment. The Extracellular portion of the chain corresponds to 105–115 (KDFIFGSALCK). Cysteines 114 and 196 form a disulfide. A helical transmembrane segment spans residues 116 to 137 (TTTYLMGTSVSVSTLNLVAISL). Topologically, residues 138 to 157 (ERYGAICKPLQSRVWQTKSH) are cytoplasmic. Residues 158–178 (ALKVIAATWCLSFAIMTPYPI) traverse the membrane as a helical segment. At 179-210 (YSNLVPFTKTNNQTANMCRFLLPSDVMQQAWH) the chain is on the extracellular side. Asparagine 190 carries N-linked (GlcNAc...) asparagine glycosylation. The chain crosses the membrane as a helical span at residues 211-234 (TFLLLILFLIPGIVMMVAYGMISL). Topologically, residues 235–312 (ELYQGIKFDA…TLMAKKRVIR (78 aa)) are cytoplasmic. Residues 313–333 (MLMVIVVLFFLCWMPIFSANA) traverse the membrane as a helical segment. Residues 334-348 (WRAYDTVSAERRLSG) lie on the Extracellular side of the membrane. A helical transmembrane segment spans residues 349-372 (TPISFILLLSYTSSCVNPIIYCFM). Residues 373 to 427 (NRRFRLGFMATFPCCPNPGPPGPRAEAGEEEEGRTTRASLSRYSYSHMSASAPPS) are Cytoplasmic-facing. Cysteine 386 carries S-palmitoyl cysteine lipidation. A disordered region spans residues 391 to 427 (GPPGPRAEAGEEEEGRTTRASLSRYSYSHMSASAPPS). Positions 411–421 (SLSRYSYSHMS) are enriched in polar residues.

Belongs to the G-protein coupled receptor 1 family.

The protein resides in the cell membrane. Its function is as follows. Receptor for cholecystokinin. Mediates pancreatic growth and enzyme secretion, smooth muscle contraction of the gall bladder and stomach. Has a 1000-fold higher affinity for CCK rather than for gastrin. It modulates feeding and dopamine-induced behavior in the central and peripheral nervous system. This receptor mediates its action by association with G proteins that activate a phosphatidylinositol-calcium second messenger system. This Oryctolagus cuniculus (Rabbit) protein is Cholecystokinin receptor type A (CCKAR).